Reading from the N-terminus, the 636-residue chain is MTYELLNTIDAPAELRRLDRRQLGTLADELRAFVLESVAQTGGHLSSNLGTVELTIALHYVFNTPDDRIVWDVGHQSYPHKILTGRREQMATLRQLDGISGFPRRSESPYDTFGTAHSSTSISAALGMALGAKTQGENRVAIAVIGDGAMSAGMAFEAMNNAGVYRNLPLVVVLNDNDMSISPPVGALNRYLARLMSGQFYAATKKGVEKLLSVAPPVLEFAKRFEEHAKGMLVPATMFEEFGFNYIGPIDGHDLESLVPTLQNIRQRALEGGRPQFLHVVTKKGQGYKLAEADPILYHGPGKFNPQEGIKPAARPAKVSYTQVFGQWLCDMAAADKRLVGITPAMREGSGMVEFEQRFPDRYYDVGIAEQHAVTFAGGLACEGLKPVVAIYSTFLQRGYDQLIHDVALQNLPVVFALDRAGLVGADGATHAGAYDMAYLRCIPNMMVMAPADENECRQLLSTAFAQDCPTAVRYPRGAGTGVVVQPTLEPLPVGKAEVRRASTAPAGQRVVILAFGSMVAPAAAAAERLDATVVNMRFVKPLDAACVLEMARTHDYVVTVEEGCVMGGAGSACLEALAAAGVATPVLQLGLPDRFVDHGDHAALLALCGLDANGILASIRERFAVQPRAVQPRVA.

Residues His75 and 116-118 each bind thiamine diphosphate; that span reads AHS. Residue Asp147 participates in Mg(2+) binding. Residues 148 to 149, Asn177, Tyr288, and Glu370 each bind thiamine diphosphate; that span reads GA. Residue Asn177 coordinates Mg(2+).

It belongs to the transketolase family. DXPS subfamily. As to quaternary structure, homodimer. The cofactor is Mg(2+). Thiamine diphosphate serves as cofactor.

The enzyme catalyses D-glyceraldehyde 3-phosphate + pyruvate + H(+) = 1-deoxy-D-xylulose 5-phosphate + CO2. It participates in metabolic intermediate biosynthesis; 1-deoxy-D-xylulose 5-phosphate biosynthesis; 1-deoxy-D-xylulose 5-phosphate from D-glyceraldehyde 3-phosphate and pyruvate: step 1/1. Its function is as follows. Catalyzes the acyloin condensation reaction between C atoms 2 and 3 of pyruvate and glyceraldehyde 3-phosphate to yield 1-deoxy-D-xylulose-5-phosphate (DXP). The polypeptide is 1-deoxy-D-xylulose-5-phosphate synthase (Ralstonia nicotianae (strain ATCC BAA-1114 / GMI1000) (Ralstonia solanacearum)).